Here is a 210-residue protein sequence, read N- to C-terminus: 3-hexulose-6-phosphate synthase 1 (210 aa).

This sequence belongs to the HPS/KGPDC family. HPS subfamily.

It catalyses the reaction D-ribulose 5-phosphate + formaldehyde = D-arabino-hex-3-ulose 6-phosphate. It functions in the pathway one-carbon metabolism; formaldehyde assimilation via RuMP pathway; D-fructose 6-phosphate from D-ribulose 5-phosphate and formaldehyde: step 1/2. In terms of biological role, catalyzes the condensation of ribulose 5-phosphate with formaldehyde to form 3-hexulose 6-phosphate. In Staphylococcus saprophyticus subsp. saprophyticus (strain ATCC 15305 / DSM 20229 / NCIMB 8711 / NCTC 7292 / S-41), this protein is 3-hexulose-6-phosphate synthase 1.